A 1940-amino-acid chain; its full sequence is Cilia- and flagella-associated protein 74 (1940 aa).

The interval 52–90 is disordered; that stretch reads GSPAVTLRRAKAAAAANGTSSPGIRGSPSPARGPGGRLP. Residues 63-90 are compositionally biased toward low complexity; that stretch reads AAAAANGTSSPGIRGSPSPARGPGGRLP. Residues 100-159 adopt a coiled-coil conformation; it reads ANVEQLKRRLQTVVAEVEGHQQRYDKVLLEANKATDLVHSMEAEIESLYVEAEELARRVP. Disordered stretches follow at residues 512 to 548, 1159 to 1336, 1373 to 1418, 1714 to 1737, and 1894 to 1940; these read VAGL…QSLT, SPHV…AAAE, PQSQ…AAPP, AGDK…GASK, and PGSR…KKAV. The span at 535–548 shows a compositional bias: low complexity; sequence SLTQQLAATQQSLT. The span at 1205 to 1220 shows a compositional bias: gly residues; that stretch reads DGGGGGAMANGNGSGG. The segment covering 1227–1236 has biased composition (acidic residues); the sequence is DGEPEDGEGD. A compositionally biased stretch (gly residues) spans 1260–1271; the sequence is GRGGRGGRGGAA. The span at 1272–1282 shows a compositional bias: acidic residues; sequence GEDEDEDEDAG. The span at 1287–1304 shows a compositional bias: low complexity; it reads RGKSSSSSKASSGRRSSS. The segment covering 1321–1335 has biased composition (acidic residues); sequence VPDDDDADAEAEAAA. Over residues 1373-1414 the composition is skewed to low complexity; sequence PQSQNPTPSQSQSGQAPAASAPSDGASGAAAAAETAASSGPA. 2 stretches are compositionally biased toward pro residues: residues 1720–1731 and 1896–1912; these read TPAPGIKPPATP and SRPP…PAPE. Over residues 1913 to 1929 the composition is skewed to low complexity; sequence PVAASGPGAGAAGVKKL. Residues 1930 to 1940 show a composition bias toward pro residues; it reads VPPPSPPKKAV.

The protein belongs to the CFAP74 family. Part of the PDCP1 complex composed of CFAP46, CFAP54, CFAP74 and CFAP221; the PDCP1 complex binds calmodulin.

The protein localises to the cytoplasm. It localises to the cytoskeleton. Its subcellular location is the cilium axoneme. In terms of biological role, as part of the central apparatus of the cilium axoneme may play a role in cilium movement and thereby cell motility. This Chlamydomonas reinhardtii (Chlamydomonas smithii) protein is Cilia- and flagella-associated protein 74.